The sequence spans 166 residues: Large ribosomal subunit protein uL10 (166 aa).

It belongs to the universal ribosomal protein uL10 family. Part of the ribosomal stalk of the 50S ribosomal subunit. The N-terminus interacts with L11 and the large rRNA to form the base of the stalk. The C-terminus forms an elongated spine to which L12 dimers bind in a sequential fashion forming a multimeric L10(L12)X complex.

Functionally, forms part of the ribosomal stalk, playing a central role in the interaction of the ribosome with GTP-bound translation factors. This Shewanella woodyi (strain ATCC 51908 / MS32) protein is Large ribosomal subunit protein uL10.